Consider the following 433-residue polypeptide: GTPase Obg (433 aa).

The Obg domain maps to 1–158; sequence MFVDQVKIYV…RNVILELKLL (158 aa). In terms of domain architecture, OBG-type G spans 159 to 329; sequence ADVGLVGFPS…LLFAIADLLE (171 aa). GTP is bound by residues 165-172, 190-194, 212-215, 282-285, and 310-312; these read GFPSVGKS, FTTLV, DLPG, NKMD, and SAA. Mg(2+)-binding residues include Ser-172 and Thr-192. The OCT domain maps to 350-428; that stretch reads KYEKEELPFT…LLDYEFEFVD (79 aa).

It belongs to the TRAFAC class OBG-HflX-like GTPase superfamily. OBG GTPase family. As to quaternary structure, monomer. Requires Mg(2+) as cofactor.

It localises to the cytoplasm. In terms of biological role, an essential GTPase which binds GTP, GDP and possibly (p)ppGpp with moderate affinity, with high nucleotide exchange rates and a fairly low GTP hydrolysis rate. Plays a role in control of the cell cycle, stress response, ribosome biogenesis and in those bacteria that undergo differentiation, in morphogenesis control. In Geobacillus thermodenitrificans (strain NG80-2), this protein is GTPase Obg.